A 906-amino-acid polypeptide reads, in one-letter code: DNA gyrase subunit A (906 aa).

Residues 35-524 (IPDVRDGLKP…GEFDQDIEDL (490 aa)) form the Topo IIA-type catalytic domain. Residue tyrosine 123 is the O-(5'-phospho-DNA)-tyrosine intermediate of the active site. Residues 551 to 557 (QKRGGKG) carry the GyrA-box motif. Residues 886–906 (SESEEDSELEEDLEQAEEVYT) are disordered.

The protein belongs to the type II topoisomerase GyrA/ParC subunit family. As to quaternary structure, heterotetramer, composed of two GyrA and two GyrB chains. In the heterotetramer, GyrA contains the active site tyrosine that forms a transient covalent intermediate with DNA, while GyrB binds cofactors and catalyzes ATP hydrolysis.

The protein localises to the cytoplasm. It carries out the reaction ATP-dependent breakage, passage and rejoining of double-stranded DNA.. Its function is as follows. A type II topoisomerase that negatively supercoils closed circular double-stranded (ds) DNA in an ATP-dependent manner to modulate DNA topology and maintain chromosomes in an underwound state. Negative supercoiling favors strand separation, and DNA replication, transcription, recombination and repair, all of which involve strand separation. Also able to catalyze the interconversion of other topological isomers of dsDNA rings, including catenanes and knotted rings. Type II topoisomerases break and join 2 DNA strands simultaneously in an ATP-dependent manner. This chain is DNA gyrase subunit A, found in Rickettsia felis (strain ATCC VR-1525 / URRWXCal2) (Rickettsia azadi).